The chain runs to 215 residues: MNIILLGPPGAGKGTQASKLVADRGMVQLSTGDMLRAAVKAGTPIGLKAKAVMEAGELVSDEIVSGLIGEKLDSMAASEGAIFDGYPRTEAQAHSLDEILASRGRVLDHVIELEVDEDALVERITGRYTCANCGEGYHDRFKQPKVAGVCDVCGSAEFKRRPDDNEETVRTRMAEYRAKTAPILPVYEARGLVRRVDGMADMADVSAAIAAILDN.

10-15 (GAGKGT) contributes to the ATP binding site. The interval 30–59 (STGDMLRAAVKAGTPIGLKAKAVMEAGELV) is NMP. AMP-binding positions include Thr31, Arg36, 57–59 (ELV), 85–88 (GYPR), and Gln92. The interval 126-163 (GRYTCANCGEGYHDRFKQPKVAGVCDVCGSAEFKRRPD) is LID. Arg127 contributes to the ATP binding site. Zn(2+) contacts are provided by Cys130, Cys133, Cys150, and Cys153. AMP-binding residues include Arg160 and Arg172. Residue Ala200 coordinates ATP.

It belongs to the adenylate kinase family. In terms of assembly, monomer.

The protein resides in the cytoplasm. It carries out the reaction AMP + ATP = 2 ADP. Its pathway is purine metabolism; AMP biosynthesis via salvage pathway; AMP from ADP: step 1/1. In terms of biological role, catalyzes the reversible transfer of the terminal phosphate group between ATP and AMP. Plays an important role in cellular energy homeostasis and in adenine nucleotide metabolism. The protein is Adenylate kinase of Rhizorhabdus wittichii (strain DSM 6014 / CCUG 31198 / JCM 15750 / NBRC 105917 / EY 4224 / RW1) (Sphingomonas wittichii).